A 944-amino-acid chain; its full sequence is DNA ligase 4 (944 aa).

9 residues coordinate ATP: glutamate 280, lysine 282, arginine 287, glutamate 340, phenylalanine 382, glutamate 442, lysine 447, lysine 464, and lysine 466. Lysine 282 serves as the catalytic N6-AMP-lysine intermediate. Glutamate 340 is a Mg(2+) binding site. Glutamate 442 lines the Mg(2+) pocket. BRCT domains lie at 681–780 and 836–941; these read PISN…PNYC and FPLF…DFPV.

This sequence belongs to the ATP-dependent DNA ligase family. Component of the DNA ligase IV complex, composed of DNL4, LIF1 and NEJ1. Interacts (via BRCT domain) with LIF1. Interacts with NEJ1. Interacts with POL4 in the DNL4-LIF1 complex. It depends on Mg(2+) as a cofactor.

The protein resides in the nucleus. It catalyses the reaction ATP + (deoxyribonucleotide)n-3'-hydroxyl + 5'-phospho-(deoxyribonucleotide)m = (deoxyribonucleotide)n+m + AMP + diphosphate.. In terms of biological role, DNA ligase involved in DNA non-homologous end joining (NHEJ); required for double-strand break (DSB) repair. This Saccharomyces cerevisiae (strain ATCC 204508 / S288c) (Baker's yeast) protein is DNA ligase 4 (DNL4).